The following is a 134-amino-acid chain: Holo-[acyl-carrier-protein] synthase (134 aa).

Mg(2+) is bound by residues D8 and E57.

This sequence belongs to the P-Pant transferase superfamily. AcpS family. It depends on Mg(2+) as a cofactor.

Its subcellular location is the cytoplasm. It carries out the reaction apo-[ACP] + CoA = holo-[ACP] + adenosine 3',5'-bisphosphate + H(+). Functionally, transfers the 4'-phosphopantetheine moiety from coenzyme A to a Ser of acyl-carrier-protein. This is Holo-[acyl-carrier-protein] synthase from Rhizobium johnstonii (strain DSM 114642 / LMG 32736 / 3841) (Rhizobium leguminosarum bv. viciae).